We begin with the raw amino-acid sequence, 294 residues long: 33 kDa chaperonin (294 aa).

Cystine bridges form between C238–C240 and C271–C274.

The protein belongs to the HSP33 family. Under oxidizing conditions two disulfide bonds are formed involving the reactive cysteines. Under reducing conditions zinc is bound to the reactive cysteines and the protein is inactive.

It localises to the cytoplasm. Redox regulated molecular chaperone. Protects both thermally unfolding and oxidatively damaged proteins from irreversible aggregation. Plays an important role in the bacterial defense system toward oxidative stress. The protein is 33 kDa chaperonin of Thermoanaerobacter pseudethanolicus (strain ATCC 33223 / 39E) (Clostridium thermohydrosulfuricum).